The sequence spans 466 residues: Ribulose bisphosphate carboxylase (466 aa).

Position 111 (Asn-111) interacts with substrate. Lys-166 serves as the catalytic Proton acceptor. Residue Lys-168 coordinates substrate. Lys-191, Asp-193, and Glu-194 together coordinate Mg(2+). Lys-191 carries the N6-carboxylysine modification. Residue His-287 is the Proton acceptor of the active site. The substrate site is built by Arg-288, His-321, and Ser-368.

This sequence belongs to the RuBisCO large chain family. Type II subfamily. As to quaternary structure, homodimer. The cofactor is Mg(2+).

The catalysed reaction is 2 (2R)-3-phosphoglycerate + 2 H(+) = D-ribulose 1,5-bisphosphate + CO2 + H2O. The enzyme catalyses D-ribulose 1,5-bisphosphate + O2 = 2-phosphoglycolate + (2R)-3-phosphoglycerate + 2 H(+). In terms of biological role, ruBisCO catalyzes two reactions: the carboxylation of D-ribulose 1,5-bisphosphate, the primary event in carbon dioxide fixation, as well as the oxidative fragmentation of the pentose substrate. Both reactions occur simultaneously and in competition at the same active site. The chain is Ribulose bisphosphate carboxylase (cbbM) from Rhodospirillum rubrum.